Here is a 232-residue protein sequence, read N- to C-terminus: MSKLGKFFKGTRSSRARAAPSAQEALARLRETEEMLAKKQEYLENRIQRELALAKKHGSQNKRAALQALKRKKRFEKQLTQVDGTLSTIEFQREALENSHTNTEVLRNMGFAAKAMKAVHDNMDLNKIDDLMQDITEQQDIAQEISEAFSQRVQFADGFDEAELLAELEELEQEELNKKMTSLELPNVPSSSLPAQPSRKASMPSSVHRSRAASSRRAEEDDDFKQLAAWAT.

Disordered stretches follow at residues 1 to 23 (MSKLGKFFKGTRSSRARAAPSAQ) and 177 to 232 (NKKM…AWAT). An intramolecular interaction with C-terminus region spans residues 1–153 (MSKLGKFFKG…EISEAFSQRV (153 aa)). Coiled coils occupy residues 21–45 (SAQEALARLRETEEMLAKKQEYLEN) and 125–185 (LNKI…SLEL). The segment at 154 to 232 (QFADGFDEAE…DFKQLAAWAT (79 aa)) is intramolecular interaction with N-terminus. Residue Ser210 is modified to Phosphoserine; by AURKB.

It belongs to the SNF7 family. As to quaternary structure, probable core component of the endosomal sorting required for transport complex III (ESCRT-III). ESCRT-III components are thought to multimerize to form a flat lattice on the perimeter membrane of the endosome. Several assembly forms of ESCRT-III may exist that interact and act sequentially. Self-associates. Interacts with CHMP2A. Interacts with CHMP4A. Interacts with CHMP4B. Interacts with CHMP6. Interacts with VPS4A. Interacts with PDCD6IP; the interaction is direct. In terms of processing, phosphorylated at Ser-210 by AURKB during cytokinesis: together with ZFYVE19/ANCHR, phosphorylated CHMP4C retains abscission-competent VPS4 (VPS4A and/or VPS4B) at the midbody ring until abscission checkpoint signaling is terminated at late cytokinesis.

It is found in the cytoplasm. The protein resides in the cytosol. Its subcellular location is the late endosome membrane. The protein localises to the midbody. It localises to the midbody ring. Its function is as follows. Probable core component of the endosomal sorting required for transport complex III (ESCRT-III) which is involved in multivesicular bodies (MVBs) formation and sorting of endosomal cargo proteins into MVBs. MVBs contain intraluminal vesicles (ILVs) that are generated by invagination and scission from the limiting membrane of the endosome and mostly are delivered to lysosomes enabling degradation of membrane proteins, such as stimulated growth factor receptors, lysosomal enzymes and lipids. The MVB pathway appears to require the sequential function of ESCRT-O, -I,-II and -III complexes. ESCRT-III proteins mostly dissociate from the invaginating membrane before the ILV is released. The ESCRT machinery also functions in topologically equivalent membrane fission events, such as the terminal stages of cytokinesis. Key component of the cytokinesis checkpoint, a process required to delay abscission to prevent both premature resolution of intercellular chromosome bridges and accumulation of DNA damage: upon phosphorylation by AURKB, together with ZFYVE19/ANCHR, retains abscission-competent VPS4 (VPS4A and/or VPS4B) at the midbody ring until abscission checkpoint signaling is terminated at late cytokinesis. Deactivation of AURKB results in dephosphorylation of CHMP4C followed by its dissociation from ANCHR and VPS4 and subsequent abscission. ESCRT-III proteins are believed to mediate the necessary vesicle extrusion and/or membrane fission activities, possibly in conjunction with the AAA ATPase VPS4. CHMP4A/B/C are required for the exosomal release of SDCBP, CD63 and syndecan. The polypeptide is Charged multivesicular body protein 4c (Chmp4c) (Mus musculus (Mouse)).